The chain runs to 660 residues: Arginine--tRNA ligase, cytoplasmic (660 aa).

Met1 bears the N-acetylmethionine mark. A could be involved in the assembly of the multisynthetase complex region spans residues 1-72 (MDGLVAQCSA…QEERRKPTKN (72 aa)). Residues 200 to 202 (SPN), His211, Tyr384, Asp388, and Gln412 contribute to the L-arginine site. The short motif at 201-212 (PNIAKEMHVGHL) is the 'HIGH' region element. Positions 529 to 543 (NTAAYLLYAFTRIRS) are interaction with tRNA.

The protein belongs to the class-I aminoacyl-tRNA synthetase family. As to quaternary structure, interacts (via N-terminus) with AIMP1 (via N-terminus); this stimulates its catalytic activity. Interacts (via N-terminus) with LARS2 (via C-terminus). Monomer. Part of a multisubunit complex that groups tRNA ligases for Arg (RARS1), Asp (DARS1), Gln (QARS1), Ile (IARS1), Leu (LARS1), Lys (KARS1), Met (MARS1) the bifunctional ligase for Glu and Pro (EPRS1) and the auxiliary subunits AIMP1/p43, AIMP2/p38 and EEF1E1/p18. Interacts with QARS1. Part of a complex composed of RARS1, QARS1 and AIMP1.

The protein resides in the cytoplasm. The protein localises to the cytosol. It carries out the reaction tRNA(Arg) + L-arginine + ATP = L-arginyl-tRNA(Arg) + AMP + diphosphate. In terms of biological role, forms part of a macromolecular complex that catalyzes the attachment of specific amino acids to cognate tRNAs during protein synthesis. Modulates the secretion of AIMP1 and may be involved in generation of the inflammatory cytokine EMAP2 from AIMP1. The chain is Arginine--tRNA ligase, cytoplasmic (Rars1) from Mus musculus (Mouse).